Reading from the N-terminus, the 422-residue chain is Histidine--tRNA ligase (422 aa).

The protein belongs to the class-II aminoacyl-tRNA synthetase family. Homodimer.

The protein resides in the cytoplasm. The catalysed reaction is tRNA(His) + L-histidine + ATP = L-histidyl-tRNA(His) + AMP + diphosphate + H(+). The protein is Histidine--tRNA ligase of Syntrophomonas wolfei subsp. wolfei (strain DSM 2245B / Goettingen).